The chain runs to 141 residues: MASVPSAGCLLARNQYYRKASVSSGPSLTGPDSANFVGDDKTQLGLPKVAESTWWFKSFFQSVPVLNVKGEDQSACGGNGPGSRSKVPSGTNNHSLLQQEESQLLGEMADSGTVNRFRNSQTVKDKPRPFHGAPKDTNSPQ.

A disordered region spans residues 72-141 (DQSACGGNGP…GAPKDTNSPQ (70 aa)). The segment covering 95–105 (SLLQQEESQLL) has biased composition (low complexity). Residues 112–122 (GTVNRFRNSQT) are compositionally biased toward polar residues.

Belongs to the PPDPF family.

The sequence is that of Pancreatic progenitor cell differentiation and proliferation factor-like protein from Bos taurus (Bovine).